Consider the following 177-residue polypeptide: Large ribosomal subunit protein uL6 (177 aa).

It belongs to the universal ribosomal protein uL6 family. In terms of assembly, part of the 50S ribosomal subunit.

In terms of biological role, this protein binds to the 23S rRNA, and is important in its secondary structure. It is located near the subunit interface in the base of the L7/L12 stalk, and near the tRNA binding site of the peptidyltransferase center. This chain is Large ribosomal subunit protein uL6, found in Polaromonas naphthalenivorans (strain CJ2).